The chain runs to 50 residues: Basic phospholipase A2 Bmaj-9 (50 aa).

3 residues coordinate Ca(2+): tyrosine 27, glycine 29, and glycine 31. Residues cysteine 28 and cysteine 45 are joined by a disulfide bond. Histidine 48 is a catalytic residue. Position 49 (aspartate 49) interacts with Ca(2+).

The protein belongs to the phospholipase A2 family. Group II subfamily. D49 sub-subfamily. The cofactor is Ca(2+). In terms of tissue distribution, expressed by the venom gland.

The protein resides in the secreted. The enzyme catalyses a 1,2-diacyl-sn-glycero-3-phosphocholine + H2O = a 1-acyl-sn-glycero-3-phosphocholine + a fatty acid + H(+). In terms of biological role, snake venom phospholipase A2 (PLA2) that causes irreversible neuromuscular blockade in chick biventer cervicis muscle preparations. The neuromuscular blockade is mediated by inhibitory action at the presynaptic motor nerve endings. PLA2 catalyzes the calcium-dependent hydrolysis of the 2-acyl groups in 3-sn-phosphoglycerides. This chain is Basic phospholipase A2 Bmaj-9, found in Bothrops marajoensis (Marajo lancehead).